The chain runs to 241 residues: Large ribosomal subunit protein uL3 (241 aa).

It belongs to the universal ribosomal protein uL3 family. In terms of assembly, part of the 50S ribosomal subunit. Forms a cluster with proteins L14 and L19.

In terms of biological role, one of the primary rRNA binding proteins, it binds directly near the 3'-end of the 23S rRNA, where it nucleates assembly of the 50S subunit. The chain is Large ribosomal subunit protein uL3 from Aquifex aeolicus (strain VF5).